The sequence spans 452 residues: Translation initiation factor eIF2B subunit gamma (452 aa).

The residue at position 1 (Met1) is an N-acetylmethionine. A Phosphoserine modification is found at Ser261.

The protein belongs to the eIF-2B gamma/epsilon subunits family. In terms of assembly, component of the translation initiation factor 2B (eIF2B) complex which is a heterodecamer of two sets of five different subunits: alpha, beta, gamma, delta and epsilon. Subunits alpha, beta and delta comprise a regulatory subcomplex and subunits epsilon and gamma comprise a catalytic subcomplex. Within the complex, the hexameric regulatory complex resides at the center, with the two heterodimeric catalytic subcomplexes bound on opposite sides.

It is found in the cytoplasm. The protein resides in the cytosol. With respect to regulation, activated by the chemical integrated stress response (ISR) inhibitor ISRIB which stimulates guanine nucleotide exchange factor activity for both phosphorylated and unphosphorylated eIF2. Functionally, acts as a component of the translation initiation factor 2B (eIF2B) complex, which catalyzes the exchange of GDP for GTP on the eukaryotic initiation factor 2 (eIF2) complex gamma subunit. Its guanine nucleotide exchange factor activity is repressed when bound to eIF2 complex phosphorylated on the alpha subunit, thereby limiting the amount of methionyl-initiator methionine tRNA available to the ribosome and consequently global translation is repressed. In Bos taurus (Bovine), this protein is Translation initiation factor eIF2B subunit gamma (EIF2B3).